The chain runs to 97 residues: Integration host factor subunit alpha (97 aa).

The protein belongs to the bacterial histone-like protein family. In terms of assembly, heterodimer of an alpha and a beta chain.

Its function is as follows. This protein is one of the two subunits of integration host factor, a specific DNA-binding protein that functions in genetic recombination as well as in transcriptional and translational control. The polypeptide is Integration host factor subunit alpha (Acinetobacter baylyi (strain ATCC 33305 / BD413 / ADP1)).